The sequence spans 876 residues: Alanine--tRNA ligase (876 aa).

Histidine 564, histidine 568, cysteine 666, and histidine 670 together coordinate Zn(2+).

Belongs to the class-II aminoacyl-tRNA synthetase family. Requires Zn(2+) as cofactor.

The protein localises to the cytoplasm. It carries out the reaction tRNA(Ala) + L-alanine + ATP = L-alanyl-tRNA(Ala) + AMP + diphosphate. Functionally, catalyzes the attachment of alanine to tRNA(Ala) in a two-step reaction: alanine is first activated by ATP to form Ala-AMP and then transferred to the acceptor end of tRNA(Ala). Also edits incorrectly charged Ser-tRNA(Ala) and Gly-tRNA(Ala) via its editing domain. The polypeptide is Alanine--tRNA ligase (Colwellia psychrerythraea (strain 34H / ATCC BAA-681) (Vibrio psychroerythus)).